Here is a 180-residue protein sequence, read N- to C-terminus: Acireductone dioxygenase (180 aa).

Residues H97, H99, E103, and H141 each contribute to the Fe(2+) site. H97, H99, E103, and H141 together coordinate Ni(2+).

It belongs to the acireductone dioxygenase (ARD) family. As to quaternary structure, monomer. Fe(2+) serves as cofactor. The cofactor is Ni(2+).

It carries out the reaction 1,2-dihydroxy-5-(methylsulfanyl)pent-1-en-3-one + O2 = 3-(methylsulfanyl)propanoate + CO + formate + 2 H(+). It catalyses the reaction 1,2-dihydroxy-5-(methylsulfanyl)pent-1-en-3-one + O2 = 4-methylsulfanyl-2-oxobutanoate + formate + 2 H(+). It functions in the pathway amino-acid biosynthesis; L-methionine biosynthesis via salvage pathway; L-methionine from S-methyl-5-thio-alpha-D-ribose 1-phosphate: step 5/6. Functionally, catalyzes 2 different reactions between oxygen and the acireductone 1,2-dihydroxy-3-keto-5-methylthiopentene (DHK-MTPene) depending upon the metal bound in the active site. Fe-containing acireductone dioxygenase (Fe-ARD) produces formate and 2-keto-4-methylthiobutyrate (KMTB), the alpha-ketoacid precursor of methionine in the methionine recycle pathway. Ni-containing acireductone dioxygenase (Ni-ARD) produces methylthiopropionate, carbon monoxide and formate, and does not lie on the methionine recycle pathway. This chain is Acireductone dioxygenase, found in Cronobacter sakazakii (strain ATCC BAA-894) (Enterobacter sakazakii).